A 304-amino-acid polypeptide reads, in one-letter code: Aspartate carbamoyltransferase catalytic subunit (304 aa).

Carbamoyl phosphate contacts are provided by R49 and T50. K77 contributes to the L-aspartate binding site. Residues R99, H127, and Q130 each coordinate carbamoyl phosphate. L-aspartate contacts are provided by R160 and R211. Carbamoyl phosphate-binding residues include A250 and P251.

The protein belongs to the aspartate/ornithine carbamoyltransferase superfamily. ATCase family. Heterododecamer (2C3:3R2) of six catalytic PyrB chains organized as two trimers (C3), and six regulatory PyrI chains organized as three dimers (R2).

It carries out the reaction carbamoyl phosphate + L-aspartate = N-carbamoyl-L-aspartate + phosphate + H(+). It participates in pyrimidine metabolism; UMP biosynthesis via de novo pathway; (S)-dihydroorotate from bicarbonate: step 2/3. Its function is as follows. Catalyzes the condensation of carbamoyl phosphate and aspartate to form carbamoyl aspartate and inorganic phosphate, the committed step in the de novo pyrimidine nucleotide biosynthesis pathway. The protein is Aspartate carbamoyltransferase catalytic subunit of Bacillus velezensis (strain DSM 23117 / BGSC 10A6 / LMG 26770 / FZB42) (Bacillus amyloliquefaciens subsp. plantarum).